The sequence spans 274 residues: Remorin 4.2 (274 aa).

Residues 1-30 (MLTLYHQERSPDATSNDRDETPETVVREVH) are compositionally biased toward basic and acidic residues. Disordered stretches follow at residues 1–71 (MLTL…EGEN), 117–157 (TDHE…TVQR), and 218–245 (AMEKTQNNVAKAQRKAEERRATAEAKRG). Polar residues-rich tracts occupy residues 61–71 (RSATTMSEGEN) and 145–156 (GPGQSRVGSTVQ). A coiled-coil region spans residues 204 to 239 (MKKIERKLEERKAKAMEKTQNNVAKAQRKAEERRAT). The span at 231–245 (RKAEERRATAEAKRG) shows a compositional bias: basic and acidic residues.

Belongs to the remorin family. As to quaternary structure, forms homodimer and heterodimer with REM4.1. Interacts with KIN11. Probably ubiquitinated and degraded by the 26S proteasome pathway. Predominantly detected in bud, stem, root, flower, silique, and leaves, and enhanced dramatically in senescence leaf.

The protein localises to the cell membrane. Its function is as follows. Collaborates with REM4.1 to positively regulate the BCTV and BSCTV susceptibility. The chain is Remorin 4.2 from Arabidopsis thaliana (Mouse-ear cress).